The chain runs to 528 residues: Probable rhamnogalacturonate lyase A (528 aa).

The signal sequence occupies residues 1–20 (MLSRTILFSTSFLWVRVANA). 2 disulfides stabilise this stretch: Cys50/Cys93 and Cys184/Cys193.

It belongs to the polysaccharide lyase 4 family.

It is found in the secreted. The enzyme catalyses Endotype eliminative cleavage of L-alpha-rhamnopyranosyl-(1-&gt;4)-alpha-D-galactopyranosyluronic acid bonds of rhamnogalacturonan I domains in ramified hairy regions of pectin leaving L-rhamnopyranose at the reducing end and 4-deoxy-4,5-unsaturated D-galactopyranosyluronic acid at the non-reducing end.. In terms of biological role, pectinolytic enzymes consist of four classes of enzymes: pectin lyase, polygalacturonase, pectin methylesterase and rhamnogalacturonase. Degrades the rhamnogalacturonan I (RG-I) backbone of pectin. This is Probable rhamnogalacturonate lyase A (rglA) from Aspergillus flavus (strain ATCC 200026 / FGSC A1120 / IAM 13836 / NRRL 3357 / JCM 12722 / SRRC 167).